The primary structure comprises 134 residues: Small ribosomal subunit protein uS8c (134 aa).

The protein belongs to the universal ribosomal protein uS8 family. In terms of assembly, part of the 30S ribosomal subunit.

It is found in the plastid. The protein localises to the chloroplast. One of the primary rRNA binding proteins, it binds directly to 16S rRNA central domain where it helps coordinate assembly of the platform of the 30S subunit. The protein is Small ribosomal subunit protein uS8c (rps8) of Panax ginseng (Korean ginseng).